A 496-amino-acid polypeptide reads, in one-letter code: Docking protein 3 (496 aa).

The segment at 18–38 (LSLDGGTGSGQKGKCEEFPSS) is disordered. Residues 63–179 (PIKDGILYQQ…WMGPICQLAF (117 aa)) form the PH domain. Ser194 bears the Phosphoserine mark. Residues 213 to 317 (EVGEFPVVVQ…ARQRERLPEL (105 aa)) enclose the IRS-type PTB domain. Residues 313–363 (RLPELTRPQPCPLPRATSLPSLDTPGELREMPPGPEPPTSRKMHLAEPGPQ) are disordered. Residues Ser330 and Ser364 each carry the phosphoserine modification. At Tyr381 the chain carries Phosphotyrosine. The segment at 408 to 447 (PTLHGGEPEPHEGPGSRSPTTSPIYHNGQDLSWPGPANDS) is disordered. Ser425 carries the phosphoserine modification.

This sequence belongs to the DOK family. Type A subfamily. In terms of assembly, on tyrosine phosphorylation, interacts with CSK and INPP5D/SHIP1 via their SH2 domains. Both Tyr-381 and Tyr-398 are required for interaction with INPP5D. Only Tyr-381 is required for interaction with CSK. Binds ABL1 through the PTB domain and in a kinase-dependent manner. Does not interact with RasGAP. In terms of processing, constitutively tyrosine-phosphorylated. Post-translationally, on IL2 stimulation, phosphorylated on C-terminal tyrosine residues possibly by Src kinases. Can also be phosphorylated by ABL1 kinase. Expressed in spleen.

It localises to the cytoplasm. The protein localises to the cell membrane. In terms of biological role, DOK proteins are enzymatically inert adaptor or scaffolding proteins. They provide a docking platform for the assembly of multimolecular signaling complexes. DOK3 is a negative regulator of JNK signaling in B-cells through interaction with INPP5D/SHIP1. May modulate ABL1 function. The polypeptide is Docking protein 3 (DOK3) (Homo sapiens (Human)).